The following is a 144-amino-acid chain: Interleukin-3 (144 aa).

The signal sequence occupies residues 1-17 (MSSLSILHLLLLLLALH).

The protein belongs to the IL-3 family. Monomer.

It is found in the secreted. Its function is as follows. Granulocyte/macrophage colony-stimulating factors are cytokines that act in hematopoiesis by controlling the production, differentiation, and function of 2 related white cell populations of the blood, the granulocytes and the monocytes-macrophages. Functionally, this CSF induces granulocytes, macrophages, mast cells, stem cells, erythroid cells, eosinophils and megakaryocytes. The polypeptide is Interleukin-3 (IL3) (Bos taurus (Bovine)).